We begin with the raw amino-acid sequence, 580 residues long: Glutamine--tRNA ligase (580 aa).

Residues 41 to 51 (PEPNGYLHIGH) carry the 'HIGH' region motif. Residues 42-44 (EPN) and 48-54 (HIGHAKA) contribute to the ATP site. Residues Asp74 and Tyr218 each coordinate L-glutamine. Residues Thr237, 285-286 (RL), and 293-295 (MSK) each bind ATP. Positions 292-296 (VMSKR) match the 'KMSKS' region motif.

This sequence belongs to the class-I aminoacyl-tRNA synthetase family. As to quaternary structure, monomer.

Its subcellular location is the cytoplasm. It carries out the reaction tRNA(Gln) + L-glutamine + ATP = L-glutaminyl-tRNA(Gln) + AMP + diphosphate. This Xylella fastidiosa (strain 9a5c) protein is Glutamine--tRNA ligase.